Here is a 158-residue protein sequence, read N- to C-terminus: Transcription elongation factor GreB (158 aa).

Belongs to the GreA/GreB family. GreB subfamily.

In terms of biological role, necessary for efficient RNA polymerase transcription elongation past template-encoded arresting sites. The arresting sites in DNA have the property of trapping a certain fraction of elongating RNA polymerases that pass through, resulting in locked ternary complexes. Cleavage of the nascent transcript by cleavage factors such as GreA or GreB allows the resumption of elongation from the new 3'terminus. GreB releases sequences of up to 9 nucleotides in length. In Escherichia coli O157:H7, this protein is Transcription elongation factor GreB.